A 483-amino-acid chain; its full sequence is Glutamyl-tRNA(Gln) amidotransferase subunit A (483 aa).

Catalysis depends on charge relay system residues lysine 76 and serine 151. Serine 175 acts as the Acyl-ester intermediate in catalysis.

This sequence belongs to the amidase family. GatA subfamily. As to quaternary structure, heterotrimer of A, B and C subunits.

The enzyme catalyses L-glutamyl-tRNA(Gln) + L-glutamine + ATP + H2O = L-glutaminyl-tRNA(Gln) + L-glutamate + ADP + phosphate + H(+). In terms of biological role, allows the formation of correctly charged Gln-tRNA(Gln) through the transamidation of misacylated Glu-tRNA(Gln) in organisms which lack glutaminyl-tRNA synthetase. The reaction takes place in the presence of glutamine and ATP through an activated gamma-phospho-Glu-tRNA(Gln). The sequence is that of Glutamyl-tRNA(Gln) amidotransferase subunit A from Pseudomonas syringae pv. syringae (strain B728a).